We begin with the raw amino-acid sequence, 101 residues long: Large ribosomal subunit protein uL23 (101 aa).

Belongs to the universal ribosomal protein uL23 family. As to quaternary structure, part of the 50S ribosomal subunit. Contacts protein L29, and trigger factor when it is bound to the ribosome.

In terms of biological role, one of the early assembly proteins it binds 23S rRNA. One of the proteins that surrounds the polypeptide exit tunnel on the outside of the ribosome. Forms the main docking site for trigger factor binding to the ribosome. The chain is Large ribosomal subunit protein uL23 from Histophilus somni (strain 129Pt) (Haemophilus somnus).